A 78-amino-acid chain; its full sequence is Major outer membrane lipoprotein Lpp (78 aa).

Residues 1 to 20 form the signal peptide; the sequence is MNRTKIVLGAVVLASTLLAG. Cys-21 is lipidated: N-palmitoyl cysteine. Residue Cys-21 is the site of S-diacylglycerol cysteine attachment. Repeats lie at residues 24-34 and 38-48; these read TAKVDQLTSDI and NAKVDQLSNDV. The stretch at 27–75 forms a coiled coil; it reads VDQLTSDIQTLNAKVDQLSNDVNAVHTDVQAAKDDAARANQRLDNQVRS. The residue at position 78 (Lys-78) is an N6-murein peptidoglycan lysine.

It belongs to the Lpp family. As to quaternary structure, homotrimer.

The protein resides in the cell outer membrane. It localises to the secreted. It is found in the cell wall. In terms of biological role, a highly abundant outer membrane lipoprotein that controls the distance between the inner and outer membranes. The only protein known to be covalently linked to the peptidoglycan network (PGN). Also non-covalently binds the PGN. The link between the cell outer membrane and PGN contributes to maintenance of the structural and functional integrity of the cell envelope, and maintains the correct distance between the PGN and the outer membrane. This chain is Major outer membrane lipoprotein Lpp, found in Photorhabdus laumondii subsp. laumondii (strain DSM 15139 / CIP 105565 / TT01) (Photorhabdus luminescens subsp. laumondii).